Reading from the N-terminus, the 370-residue chain is Dual-specificity RNA methyltransferase RlmN (370 aa).

Glu93 functions as the Proton acceptor in the catalytic mechanism. In terms of domain architecture, Radical SAM core spans 99–337 (EEGRGTLCVS…VTTVRKTRGD (239 aa)). Residues Cys106 and Cys343 are joined by a disulfide bond. Cys113, Cys117, and Cys120 together coordinate [4Fe-4S] cluster. Residues 167–168 (GE), Ser199, 221–223 (SLH), and Asn300 contribute to the S-adenosyl-L-methionine site. Cys343 functions as the S-methylcysteine intermediate in the catalytic mechanism.

This sequence belongs to the radical SAM superfamily. RlmN family. Requires [4Fe-4S] cluster as cofactor.

The protein resides in the cytoplasm. The enzyme catalyses adenosine(2503) in 23S rRNA + 2 reduced [2Fe-2S]-[ferredoxin] + 2 S-adenosyl-L-methionine = 2-methyladenosine(2503) in 23S rRNA + 5'-deoxyadenosine + L-methionine + 2 oxidized [2Fe-2S]-[ferredoxin] + S-adenosyl-L-homocysteine. The catalysed reaction is adenosine(37) in tRNA + 2 reduced [2Fe-2S]-[ferredoxin] + 2 S-adenosyl-L-methionine = 2-methyladenosine(37) in tRNA + 5'-deoxyadenosine + L-methionine + 2 oxidized [2Fe-2S]-[ferredoxin] + S-adenosyl-L-homocysteine. Specifically methylates position 2 of adenine 2503 in 23S rRNA and position 2 of adenine 37 in tRNAs. m2A2503 modification seems to play a crucial role in the proofreading step occurring at the peptidyl transferase center and thus would serve to optimize ribosomal fidelity. This chain is Dual-specificity RNA methyltransferase RlmN, found in Francisella tularensis subsp. tularensis (strain WY96-3418).